The chain runs to 208 residues: Proheparin-binding EGF-like growth factor (208 aa).

The N-terminal stretch at 1-23 is a signal peptide; the sequence is MKLLPSVVLKLFLAAVFSALVTG. The propeptide occupies 24-62; that stretch reads ESLERLRRGLADGTSNLVSPTESTDQLLPPGGGRGREVL. Residues 24 to 161 lie on the Extracellular side of the membrane; it reads ESLERLRRGL…NRLYTYDHTT (138 aa). Polar residues predominate over residues 37 to 49; it reads TSNLVSPTESTDQ. Disordered regions lie at residues 37 to 57 and 81 to 104; these read TSNL…GGGR and QALA…LGKK. Residue Thr85 is glycosylated (O-linked (GalNAc...) threonine). Residues 93–102 show a composition bias toward basic residues; sequence KRKKKGKGLG. Residues 104–144 form the EGF-like domain; that stretch reads KRDPCLRKYKDFCIHGECKYVKELRAPSCICHPGYHGERCH. 3 disulfides stabilise this stretch: Cys108-Cys121, Cys116-Cys132, and Cys134-Cys143. Residues 149 to 208 constitute a propeptide, C-terminal; the sequence is PVKNRLYTYDHTTILAVVAVVLSSVCLLVIVGLLMFRYHRRGGYDVENEEKVKLGVTASH. A helical transmembrane segment spans residues 162 to 182; sequence ILAVVAVVLSSVCLLVIVGLL. Topologically, residues 183–208 are cytoplasmic; the sequence is MFRYHRRGGYDVENEEKVKLGVTASH.

As to quaternary structure, interacts with FBLN1. Interacts with EGFR and ERBB4. Post-translationally, O-glycosylated. In terms of tissue distribution, macrophages, midbrain, cerebellum, hypothalamus, cerebral cortex, bulbourethral gland, lung, heart ventricle, kidney, skin, prostate, seminal vesicle, testis; at low levels in lymph node, thymus, spleen; not detected in pituitary, olfactory bulb, thyroid, duodenum, pancreas, liver, submaxillary gland.

The protein localises to the secreted. The protein resides in the extracellular space. It is found in the cell membrane. Its function is as follows. Growth factor that mediates its effects via EGFR, ERBB2 and ERBB4. Required for normal cardiac valve formation and normal heart function. Promotes smooth muscle cell proliferation. May be involved in macrophage-mediated cellular proliferation. It is mitogenic for fibroblasts, but not endothelial cells. It is able to bind EGF receptor/EGFR with higher affinity than EGF itself and is a far more potent mitogen for smooth muscle cells than EGF. Also acts as a diphtheria toxin receptor. This chain is Proheparin-binding EGF-like growth factor (HBEGF), found in Sus scrofa (Pig).